Here is a 311-residue protein sequence, read N- to C-terminus: Mas-related G-protein coupled receptor member E (311 aa).

Topologically, residues 1–25 (MEPREAGQHAGAADGAQEDVAFNLV) are extracellular. A helical membrane pass occupies residues 26–46 (ILSLTEGLGLGGLLGNGAVLW). Residues 47–63 (LLSSNVYRNPFAIYLLD) are Cytoplasmic-facing. The helical transmembrane segment at 64–84 (VACADLIFLGCHMVAIIPDLL) threads the bilayer. At 85–95 (QGRLDFPGFVQ) the chain is on the extracellular side. A helical membrane pass occupies residues 96 to 116 (TSLATLRFFCYIVGLSLLVAV). Residues 117–136 (SVEQCLAALFPAWYSCRRPR) are Cytoplasmic-facing. Residues 137-157 (HLTTCVCALTWACCLLLHLLL) form a helical membrane-spanning segment. Topologically, residues 158 to 177 (SGACTQFFGEPSRHLCRTLW) are extracellular. Residues 178–198 (LVAAVLLAVLCCTMCGASLML) form a helical membrane-spanning segment. The Cytoplasmic segment spans residues 199–216 (LLQVERGPQRPPPRGFPT). The helical transmembrane segment at 217–237 (LILLAVLLFLFCGLPFGIYWL) threads the bilayer. At 238–251 (SRNLLWHIPHYFYH) the chain is on the extracellular side. Residues 252 to 272 (FSFLTAAVYCAAKPVVYFCLG) form a helical membrane-spanning segment. Residues 273–311 (SAQGRRLPLRLVLQRALGDEAELGAVRETSRRGLVDIAA) lie on the Cytoplasmic side of the membrane.

This sequence belongs to the G-protein coupled receptor 1 family. Mas subfamily.

Its subcellular location is the cell membrane. In terms of biological role, orphan receptor. May regulate nociceptor function and/or development, including the sensation or modulation of pain. The chain is Mas-related G-protein coupled receptor member E (MRGPRE) from Macaca fascicularis (Crab-eating macaque).